The sequence spans 153 residues: MGPFSTITVSFLFCLAFWHPDQIGANPVYNAMSNADLMDFKNLLDHLEDRMPFEDEAVPPQALSEQSDEAGAALSPLPEVPPWTGEVSPAQRDGEALGRSTWEASERSALLKSKLRALLTAPRSLRRSSCFGGRIDRIGAQSGLGCNSFRYRR.

The first 25 residues, 1–25 (MGPFSTITVSFLFCLAFWHPDQIGA), serve as a signal peptide directing secretion. 2 consecutive propeptides follow at residues 26–123 (NPVY…TAPR) and 93–103 (DGEALGRSTWE). A disordered region spans residues 54–101 (EDEAVPPQALSEQSDEAGAALSPLPEVPPWTGEVSPAQRDGEALGRST). The residue at position 129 (Ser-129) is a Phosphoserine. Cys-130 and Cys-146 form a disulfide bridge. Residues 147-151 (NSFRY) are important for degradation of atrial natriuretic peptide by IDE.

Belongs to the natriuretic peptide family. In terms of assembly, homodimer; disulfide-linked antiparallel dimer. Post-translationally, the precursor molecule is proteolytically cleaved by CORIN at Arg-123 to produce the atrial natriuretic peptide. Undergoes further proteolytic cleavage by unknown proteases to give rise to long-acting natriuretic peptide, vessel dilator and kaliuretic peptide. Additional processing gives rise to the auriculin and atriopeptin peptides. In the kidneys, alternative processing by an unknown protease results in the peptide urodilatin. Cleavage by MME initiates degradation of the factor and thereby regulates its activity. Degradation by IDE results in reduced activation of NPR1 (in vitro). During IDE degradation, the resulting products can temporarily stimulate NPR2 to produce cGMP, before the fragments are completely degraded and inactivated by IDE (in vitro). In terms of processing, degraded by IDE. Post-translationally, phosphorylation on Ser-129 decreases vasorelaxant activity.

The protein localises to the secreted. Its subcellular location is the perikaryon. It localises to the cell projection. Functionally, hormone that plays a key role in mediating cardio-renal homeostasis, and is involved in vascular remodeling and regulating energy metabolism. Acts by specifically binding and stimulating NPR1 to produce cGMP, which in turn activates effector proteins, such as PRKG1, that drive various biological responses. Regulates vasodilation, natriuresis, diuresis and aldosterone synthesis and is therefore essential for regulating blood pressure, controlling the extracellular fluid volume and maintaining the fluid-electrolyte balance. Also involved in inhibiting cardiac remodeling and cardiac hypertrophy by inducing cardiomyocyte apoptosis and attenuating the growth of cardiomyocytes and fibroblasts. Plays a role in female pregnancy by promoting trophoblast invasion and spiral artery remodeling in uterus, and thus prevents pregnancy-induced hypertension. In adipose tissue, acts in various cGMP- and PKG-dependent pathways to regulate lipid metabolism and energy homeostasis. This includes up-regulating lipid metabolism and mitochondrial oxygen utilization by activating the AMP-activated protein kinase (AMPK), and increasing energy expenditure by acting via MAPK11 to promote the UCP1-dependent thermogenesis of brown adipose tissue. Binds the clearance receptor NPR3 which removes the hormone from circulation. In terms of biological role, may have a role in cardio-renal homeostasis through regulation of natriuresis, diuresis, vasodilation, and inhibiting aldosterone synthesis. In vitro, promotes the production of cGMP and induces vasodilation. May promote natriuresis, at least in part, by enhancing prostaglandin E2 synthesis resulting in the inhibition of renal Na+-K+-ATPase. However reports on the involvement of this peptide in mammal blood volume and blood pressure homeostasis are conflicting; according to a report, in vivo it is not sufficient to activate cGMP and does not inhibit collecting duct transport nor effect diuresis and natriuresis. Appears to bind to specific receptors that are distinct from the receptors bound by atrial natriuretic peptide and vessel dilator. Possibly enhances protein excretion in urine by decreasing proximal tubular protein reabsorption. Its function is as follows. May have a role in cardio-renal homeostasis through regulation of natriuresis, diuresis, and vasodilation. In vitro, promotes the production of cGMP and induces vasodilation. May promote natriuresis, at least in part, by enhancing prostaglandin E2 synthesis resulting in the inhibition of renal Na+-K+-ATPase. However reports on the involvement of this peptide in mammal blood volume and blood pressure homeostasis are conflicting; according to a report it is not sufficient to activate cGMP and does not inhibit collecting duct transport nor effect diuresis and natriuresis. Appears to bind to specific receptors that are distinct from the receptors bound by the atrial natriuretic and long-acting natriuretic peptides. Possibly functions in protein excretion in urine by maintaining the integrity of the proximal tubules and enhancing protein excretion by decreasing proximal tubular protein reabsorption. May have a role in cardio-renal homeostasis through regulation of diuresis and inhibiting aldosterone synthesis. In vitro, promotes the production of cGMP and induces vasodilation. May promote natriuresis, at least in part, by enhancing prostaglandin E2 synthesis resulting in the inhibition of renal Na+-K+-ATPase. May have a role in potassium excretion but not sodium excretion (natriuresis). Possibly enhances protein excretion in urine by decreasing proximal tubular protein reabsorption. Functionally, hormone produced in the kidneys that appears to be important for maintaining cardio-renal homeostasis. Mediates vasodilation, natriuresis and diuresis primarily in the renal system, in order to maintain the extracellular fluid volume and control the fluid-electrolyte balance. Specifically binds and stimulates cGMP production by renal transmembrane receptors, likely NPR1. Urodilatin not ANP, may be the natriuretic peptide responsible for the regulation of sodium and water homeostasis in the kidney. In terms of biological role, may have a role in cardio-renal homeostasis through regulation of natriuresis and vasodilation. In vivo promotes natriuresis and in vitro, vasodilates renal artery strips. Its function is as follows. May have a role in cardio-renal homeostasis through regulation of regulation of natriuresis and vasodilation. In vivo promotes natriuresis. In vitro, vasodilates intestinal smooth muscle but not smooth muscle strips. May have a role in cardio-renal homeostasis through regulation of natriuresis and vasodilation. In vivo promotes natriuresis. In vitro, selectively vasodilates intestinal and vascular smooth muscle strips. Functionally, may have a role in cardio-renal homeostasis through regulation of natriuresis and vasodilation. In vivo promotes natriuresis. In vitro, selectively vasodilates intestinal smooth muscle but not vascular smooth muscle strips. The polypeptide is Natriuretic peptides A (NPPA) (Oryctolagus cuniculus (Rabbit)).